An 89-amino-acid chain; its full sequence is Large ribosomal subunit protein bL27 (89 aa).

The segment at 1–21 (MAHKKSGGSSSNGRDSESKRL) is disordered.

The protein belongs to the bacterial ribosomal protein bL27 family.

This chain is Large ribosomal subunit protein bL27, found in Caulobacter vibrioides (strain NA1000 / CB15N) (Caulobacter crescentus).